Reading from the N-terminus, the 204-residue chain is UPF0215 protein MTH_1316 (204 aa).

The protein belongs to the UPF0215 family.

The protein is UPF0215 protein MTH_1316 of Methanothermobacter thermautotrophicus (strain ATCC 29096 / DSM 1053 / JCM 10044 / NBRC 100330 / Delta H) (Methanobacterium thermoautotrophicum).